A 284-amino-acid chain; its full sequence is Signal peptidase I (284 aa).

Residues 4 to 22 form a helical membrane-spanning segment; that stretch reads NFPLLLVIAVAVCGALALV. Residues 23–58 lie on the Cytoplasmic side of the membrane; the sequence is DLVLFAPRRRAAISSYEGQVNEPDPAVLEKLNKEPL. A helical transmembrane segment spans residues 59–77; the sequence is LVEYGKSFFPVLFIVLVLR. The Periplasmic portion of the chain corresponds to 78–284; the sequence is SFLVEPFQIP…PNFSRVGVIH (207 aa). Catalysis depends on residues Ser-90 and Lys-145.

The protein belongs to the peptidase S26 family.

It localises to the cell inner membrane. It catalyses the reaction Cleavage of hydrophobic, N-terminal signal or leader sequences from secreted and periplasmic proteins.. The chain is Signal peptidase I (lepB) from Pseudomonas aeruginosa (strain ATCC 15692 / DSM 22644 / CIP 104116 / JCM 14847 / LMG 12228 / 1C / PRS 101 / PAO1).